A 55-amino-acid chain; its full sequence is Protein CADMIUM TOLERANCE 1 (55 aa).

A helical transmembrane segment spans residues 24–40 (GCLYACIFTALCCFCCY).

Belongs to the CYSTM1 family.

Its subcellular location is the cell membrane. The protein resides in the secreted. It is found in the cell wall. In terms of biological role, confers resistance to heavy metal ions (e.g. cadmium (CdCl(2)) and copper (CuCl(2))) by chelating them at the plasma membrane of root cells, thus stopping their entry and reducing their accumulation. Binds to aluminium (Al). In Oryza sativa subsp. indica (Rice), this protein is Protein CADMIUM TOLERANCE 1.